Here is a 614-residue protein sequence, read N- to C-terminus: MTIDYQKLGLIAGIEIHQQLNTKEKLFCRCPTTIREAEESKGEFFRYLRATKSEMGELDRAAEEEMMQVRQFRYLTYDTTCLVENDEEPPAPLNEEALDIVLTIAKVCRMTPVPEIHTMRKLVIDGSNTSGFQRTALVAMNGTLPGGAGIETVCLEEEAAQRIEDTIFSLDRLGIPLIEITTSPCMHTPEAVQETAAQIGMILRSTGKVKRGLGTIRQDINISIREGARVEIKGVQELDLIAEVVRREVCRQVSLLEIREELKKRGASVEKTLVDVTSLFTDSKSRVLKSAPKILAIRLNKFAGLVGREIQPGRRLGSEMSDYAKKCGVGGLFHTDELPAYGVTEDEVTNLKKALDATPDDCVIIVADKPQRCQCAMQQIIRRAEMAFEGVPKETRKMLEGGSTAYMRPLPGAARMYPETDVFQVRVTPERFASLEIPEMIDDTIARYMQEFGLAREVARQMAYSERRSAFEEAIHSGIKPALAERAFNSTLRELSREGAQVHRIKDEDILQVLILINSGEVAKEALSPILTALAEGKTPAEACERAAPKVSEEELTKIINRIVAERADFIKERGNAATGPVMGVVMKEVRGSVDGKIVNQILREAISQVLKNA.

This sequence belongs to the GatB/GatE family. GatE subfamily. As to quaternary structure, heterodimer of GatD and GatE.

The enzyme catalyses L-glutamyl-tRNA(Gln) + L-glutamine + ATP + H2O = L-glutaminyl-tRNA(Gln) + L-glutamate + ADP + phosphate + H(+). In terms of biological role, allows the formation of correctly charged Gln-tRNA(Gln) through the transamidation of misacylated Glu-tRNA(Gln) in organisms which lack glutaminyl-tRNA synthetase. The reaction takes place in the presence of glutamine and ATP through an activated gamma-phospho-Glu-tRNA(Gln). The GatDE system is specific for glutamate and does not act on aspartate. This Methanospirillum hungatei JF-1 (strain ATCC 27890 / DSM 864 / NBRC 100397 / JF-1) protein is Glutamyl-tRNA(Gln) amidotransferase subunit E.